Here is a 91-residue protein sequence, read N- to C-terminus: Ragulator complex protein LAMTOR5 homolog (91 aa).

This sequence belongs to the LAMTOR5 family. As to quaternary structure, part of the Ragulator complex.

It localises to the cytoplasm. The protein resides in the lysosome. In terms of biological role, regulator of the TOR pathway, a signaling cascade that promotes cell growth in response to growth factors, energy levels, and amino acids. As part of the Ragulator complex, may activate the TOR signaling cascade in response to amino acids. The polypeptide is Ragulator complex protein LAMTOR5 homolog (Ixodes scapularis (Black-legged tick)).